A 395-amino-acid chain; its full sequence is Cytochrome b561 and DOMON domain-containing protein At5g47530 (395 aa).

The N-terminal stretch at 1 to 24 (MAISSNLLLCLSLFIFIITKSALA) is a signal peptide. Positions 47–162 (LDSFLHYTYD…GIINTVWQDG (116 aa)) constitute a DOMON domain. In terms of domain architecture, Cytochrome b561 spans 176 to 371 (GNNVRSVSTL…LEGFTWYVVI (196 aa)). 2 helical membrane-spanning segments follow: residues 210–230 (IHGI…AIIA) and 242–262 (AWFY…VAGW). Residues histidine 211, histidine 247, and histidine 280 each coordinate heme b. The helical transmembrane segment at 282 to 302 (AVGIALFCLATIQVFAMFLRP) threads the bilayer. Histidine 316 contacts heme b. A run of 2 helical transmembrane segments spans residues 318–338 (TVGY…LDIL) and 351–371 (IIVV…YVVI).

Requires heme b as cofactor.

The protein localises to the membrane. Functionally, may act as a catecholamine-responsive trans-membrane electron transporter. The sequence is that of Cytochrome b561 and DOMON domain-containing protein At5g47530 from Arabidopsis thaliana (Mouse-ear cress).